The sequence spans 466 residues: Asparagine--tRNA ligase (466 aa).

Belongs to the class-II aminoacyl-tRNA synthetase family. As to quaternary structure, homodimer.

It localises to the cytoplasm. It carries out the reaction tRNA(Asn) + L-asparagine + ATP = L-asparaginyl-tRNA(Asn) + AMP + diphosphate + H(+). The polypeptide is Asparagine--tRNA ligase (Vibrio parahaemolyticus serotype O3:K6 (strain RIMD 2210633)).